The sequence spans 125 residues: Fluoride-specific ion channel FluC (125 aa).

4 helical membrane passes run 5–25, 29–49, 66–86, and 95–115; these read LLVA…GALV, LGAG…FLIG, LFLA…SYET, and VGKA…LAFL. Residues Gly-74 and Thr-77 each contribute to the Na(+) site.

The protein belongs to the fluoride channel Fluc/FEX (TC 1.A.43) family.

It localises to the cell inner membrane. It catalyses the reaction fluoride(in) = fluoride(out). Its activity is regulated as follows. Na(+) is not transported, but it plays an essential structural role and its presence is essential for fluoride channel function. Fluoride-specific ion channel. Important for reducing fluoride concentration in the cell, thus reducing its toxicity. This chain is Fluoride-specific ion channel FluC, found in Thermus thermophilus (strain ATCC 27634 / DSM 579 / HB8).